A 383-amino-acid chain; its full sequence is Acetylornithine deacetylase (383 aa).

A Zn(2+)-binding site is contributed by His80. Asp82 is an active-site residue. Asp112 contacts Zn(2+). The active site involves Glu144. Zn(2+)-binding residues include Glu145, Glu169, and His355.

The protein belongs to the peptidase M20A family. ArgE subfamily. In terms of assembly, homodimer. Requires Zn(2+) as cofactor. The cofactor is Co(2+). Glutathione serves as cofactor.

Its subcellular location is the cytoplasm. It catalyses the reaction N(2)-acetyl-L-ornithine + H2O = L-ornithine + acetate. Its pathway is amino-acid biosynthesis; L-arginine biosynthesis; L-ornithine from N(2)-acetyl-L-ornithine (linear): step 1/1. In terms of biological role, catalyzes the hydrolysis of the amide bond of N(2)-acetylated L-amino acids. Cleaves the acetyl group from N-acetyl-L-ornithine to form L-ornithine, an intermediate in L-arginine biosynthesis pathway, and a branchpoint in the synthesis of polyamines. The chain is Acetylornithine deacetylase from Klebsiella pneumoniae (strain 342).